The sequence spans 161 residues: Calcium-binding protein CML24 (161 aa).

4 EF-hand domains span residues 13–48 (GSMD…LSPT), 49–84 (ASPE…GIGG), 90–125 (NDVS…LGEK), and 126–161 (CSVQ…GGGA). The Ca(2+) site is built by D26, N28, D30, K32, E37, D62, D64, N66, E73, D103, D105, N107, R109, E114, D139, D141, D143, C145, and E150.

As to expression, expressed in seed coat, seedling radical, cotyledons, hypocotyl, shoot apex and elongating root. Expressed in the vasculature of cotyledons, leaves and roots. Highly expressed in guard cells, trichomes and hydathodes. Expressed in inflorescence stem branch points, silique abscission zone, young and mature styles and stigmatic papillae, mature anthers and developing seed.

Functionally, calcium-binding protein that may positively regulate abscisic acid (ABA) inhibition of germination and seedling development. May be required for photoperiod-induced flowering and function in ion homeostasis. This Arabidopsis thaliana (Mouse-ear cress) protein is Calcium-binding protein CML24 (CML24).